Reading from the N-terminus, the 225-residue chain is NAD(P)H-quinone oxidoreductase subunit K, chloroplastic (225 aa).

Cysteine 43, cysteine 44, cysteine 108, and cysteine 139 together coordinate [4Fe-4S] cluster.

It belongs to the complex I 20 kDa subunit family. In terms of assembly, NDH is composed of at least 16 different subunits, 5 of which are encoded in the nucleus. [4Fe-4S] cluster serves as cofactor.

Its subcellular location is the plastid. The protein resides in the chloroplast thylakoid membrane. The catalysed reaction is a plastoquinone + NADH + (n+1) H(+)(in) = a plastoquinol + NAD(+) + n H(+)(out). It catalyses the reaction a plastoquinone + NADPH + (n+1) H(+)(in) = a plastoquinol + NADP(+) + n H(+)(out). Functionally, NDH shuttles electrons from NAD(P)H:plastoquinone, via FMN and iron-sulfur (Fe-S) centers, to quinones in the photosynthetic chain and possibly in a chloroplast respiratory chain. The immediate electron acceptor for the enzyme in this species is believed to be plastoquinone. Couples the redox reaction to proton translocation, and thus conserves the redox energy in a proton gradient. This is NAD(P)H-quinone oxidoreductase subunit K, chloroplastic from Eucalyptus globulus subsp. globulus (Tasmanian blue gum).